A 452-amino-acid chain; its full sequence is PHO85 cyclin CLG1 (452 aa).

This sequence belongs to the cyclin family. PCL1,2 subfamily. As to quaternary structure, forms a cyclin-CDK complex with PHO85.

Cyclin partner of the cyclin-dependent kinase (CDK) PHO85. Has a role in cell integrity and polarized cell growth together with the other PCL1/PCL2 cyclin family members. This is PHO85 cyclin CLG1 (CLG1) from Saccharomyces cerevisiae (strain ATCC 204508 / S288c) (Baker's yeast).